The primary structure comprises 291 residues: ATP synthase gamma chain (291 aa).

It belongs to the ATPase gamma chain family. F-type ATPases have 2 components, CF(1) - the catalytic core - and CF(0) - the membrane proton channel. CF(1) has five subunits: alpha(3), beta(3), gamma(1), delta(1), epsilon(1). CF(0) has three main subunits: a, b and c.

The protein resides in the cell membrane. Functionally, produces ATP from ADP in the presence of a proton gradient across the membrane. The gamma chain is believed to be important in regulating ATPase activity and the flow of protons through the CF(0) complex. This is ATP synthase gamma chain from Streptococcus uberis (strain ATCC BAA-854 / 0140J).